The chain runs to 248 residues: Anamorsin homolog (248 aa).

The interval 4-129 is N-terminal SAM-like domain; that stretch reads FKGLQKSLYI…ETGSSARLSF (126 aa). Residues 130–161 form a linker region; that stretch reads AKKNANAANVWKISGDDEELIDEEELLDEEDK. [2Fe-2S] cluster contacts are provided by cysteine 172, cysteine 181, cysteine 184, and cysteine 186. The fe-S binding site A stretch occupies residues 172 to 186; sequence CSTTGKRKACKNCSC. Residues cysteine 209, cysteine 212, cysteine 220, and cysteine 223 each coordinate [4Fe-4S] cluster. 2 consecutive short sequence motifs (cx2C motif) follow at residues 209-212 and 220-223; these read CGNC and CSTC. A fe-S binding site B region spans residues 209–223; sequence CGNCYLGDAFRCSTC.

Belongs to the anamorsin family. Monomer. [2Fe-2S] cluster is required as a cofactor. The cofactor is [4Fe-4S] cluster.

It localises to the cytoplasm. Its subcellular location is the mitochondrion intermembrane space. Functionally, component of the cytosolic iron-sulfur (Fe-S) protein assembly (CIA) machinery. Required for the maturation of extramitochondrial Fe-S proteins. Part of an electron transfer chain functioning in an early step of cytosolic Fe-S biogenesis, facilitating the de novo assembly of a [4Fe-4S] cluster on the cytosolic Fe-S scaffold complex. Electrons are transferred from NADPH via a FAD- and FMN-containing diflavin oxidoreductase. Together with the diflavin oxidoreductase, also required for the assembly of the diferric tyrosyl radical cofactor of ribonucleotide reductase (RNR), probably by providing electrons for reduction during radical cofactor maturation in the catalytic small subunit. In Drosophila sechellia (Fruit fly), this protein is Anamorsin homolog.